The chain runs to 926 residues: Alpha-aminoadipic semialdehyde synthase, mitochondrial (926 aa).

Residues 1–27 (MLRVSRTKLGRLSPSLSRGLHHKAVMA) constitute a mitochondrion transit peptide. The tract at residues 28–455 (LRREDVNAWE…DAVIASNGML (428 aa)) is lysine-ketoglutarate reductase. N6-acetyllysine occurs at positions 48 and 56. Lys93 carries the post-translational modification N6-acetyllysine; alternate. Lys93 carries the post-translational modification N6-succinyllysine; alternate. At Lys128 the chain carries N6-acetyllysine. Position 138 is an N6-acetyllysine; alternate (Lys138). Lys138 bears the N6-succinyllysine; alternate mark. The residue at position 274 (Lys274) is an N6-succinyllysine. Lys286 is subject to N6-acetyllysine; alternate. N6-succinyllysine; alternate is present on Lys286. Lys333 is modified (N6-succinyllysine). Lys458 bears the N6-acetyllysine; alternate mark. Lys458 is modified (N6-succinyllysine; alternate). Positions 477–926 (MGTKKKVLVL…MYTTQSTIKL (450 aa)) are saccharopine dehydrogenase. Positions 488, 512, and 516 each coordinate NAD(+). N6-acetyllysine; alternate is present on residues Lys523 and Lys535. N6-succinyllysine; alternate occurs at positions 523 and 535. NAD(+) is bound by residues Leu554, Ala576, and Ser577. 577 to 578 (SY) is a binding site for L-saccharopine. An N6-acetyllysine; alternate modification is found at Lys584. An N6-succinyllysine; alternate modification is found at Lys584. 3 residues coordinate NAD(+): Leu603, Asp604, and Pro605. Residue Asp604 coordinates L-saccharopine. An L-saccharopine-binding site is contributed by Arg703. Position 707 is an N6-acetyllysine (Lys707). 724-726 (TLR) provides a ligand contact to L-saccharopine. Position 732 is an N6-succinyllysine (Lys732). Lys739 is subject to N6-acetyllysine. N6-acetyllysine; alternate is present on Lys761. An N6-succinyllysine; alternate modification is found at Lys761. N6-acetyllysine is present on Lys780.

This sequence in the N-terminal section; belongs to the AlaDH/PNT family. It in the C-terminal section; belongs to the saccharopine dehydrogenase family. In terms of assembly, homotetramer.

The protein resides in the mitochondrion. The catalysed reaction is L-saccharopine + NADP(+) + H2O = L-lysine + 2-oxoglutarate + NADPH + H(+). The enzyme catalyses L-saccharopine + NAD(+) + H2O = (S)-2-amino-6-oxohexanoate + L-glutamate + NADH + H(+). Its pathway is amino-acid degradation; L-lysine degradation via saccharopine pathway; glutaryl-CoA from L-lysine: step 1/6. It functions in the pathway amino-acid degradation; L-lysine degradation via saccharopine pathway; glutaryl-CoA from L-lysine: step 2/6. Functionally, bifunctional enzyme that catalyzes the first two steps in lysine degradation. This Bos taurus (Bovine) protein is Alpha-aminoadipic semialdehyde synthase, mitochondrial.